A 420-amino-acid chain; its full sequence is MRIDLSLLLSDQNLDAGAPTSQRQLRIAVAAKADDHDRRLPLNLCLVLDHSGSMDGQPLETVKSAALGLIDRLEEDDRLSVIAFDHRAKIVIENQQVRNGAAIAKAIERLKAEGGTAIDEGLKLGIQEAAKGKEDRVSHIFLLTDGENEHGDNDRCLKLGTVASDYKLTVHTLGFGDHWNQDVLEAIAASAQGSLSYIENPSEALHTFRQLFQRMSNVGLTNAHLLLELAPQAHLAIVKPVAQVSPETMDLTVQNQGAIEEVRLGDLMTDQERVLLLNLYLDQLLPGQHVIGQVQIRYDDPASGQTNLLSDPLPLTIQVQTQYQPSTDVQVQESILTLAKYRQTQIAETKLKAGDRQGAATMLQTAAKTALQMGDKNGATILQTNATRLQSGEDLSEGDRKKTRMVSKTTLQPPSAPSEH.

Residues 43-215 enclose the VWFA domain; sequence NLCLVLDHSG…HTFRQLFQRM (173 aa). The disordered stretch occupies residues 389-420; that stretch reads LQSGEDLSEGDRKKTRMVSKTTLQPPSAPSEH.

This is an uncharacterized protein from Synechocystis sp. (strain ATCC 27184 / PCC 6803 / Kazusa).